Here is a 170-residue protein sequence, read N- to C-terminus: Acireductone dioxygenase (170 aa).

Fe(2+)-binding residues include H99, H101, E105, and H144. Ni(2+) contacts are provided by H99, H101, E105, and H144.

It belongs to the acireductone dioxygenase (ARD) family. Monomer. Fe(2+) serves as cofactor. It depends on Ni(2+) as a cofactor.

It carries out the reaction 1,2-dihydroxy-5-(methylsulfanyl)pent-1-en-3-one + O2 = 3-(methylsulfanyl)propanoate + CO + formate + 2 H(+). The enzyme catalyses 1,2-dihydroxy-5-(methylsulfanyl)pent-1-en-3-one + O2 = 4-methylsulfanyl-2-oxobutanoate + formate + 2 H(+). It functions in the pathway amino-acid biosynthesis; L-methionine biosynthesis via salvage pathway; L-methionine from S-methyl-5-thio-alpha-D-ribose 1-phosphate: step 5/6. Its function is as follows. Catalyzes 2 different reactions between oxygen and the acireductone 1,2-dihydroxy-3-keto-5-methylthiopentene (DHK-MTPene) depending upon the metal bound in the active site. Fe-containing acireductone dioxygenase (Fe-ARD) produces formate and 2-keto-4-methylthiobutyrate (KMTB), the alpha-ketoacid precursor of methionine in the methionine recycle pathway. Ni-containing acireductone dioxygenase (Ni-ARD) produces methylthiopropionate, carbon monoxide and formate, and does not lie on the methionine recycle pathway. This chain is Acireductone dioxygenase, found in Bacillus cereus (strain ATCC 10987 / NRS 248).